The following is a 429-amino-acid chain: Enolase (429 aa).

Glutamine 163 provides a ligand contact to (2R)-2-phosphoglycerate. The Proton donor role is filled by glutamate 205. Aspartate 242, glutamate 287, and aspartate 314 together coordinate Mg(2+). (2R)-2-phosphoglycerate-binding residues include lysine 339, arginine 368, serine 369, and lysine 390. Lysine 339 (proton acceptor) is an active-site residue.

Belongs to the enolase family. The cofactor is Mg(2+).

The protein resides in the cytoplasm. It is found in the secreted. Its subcellular location is the cell surface. It catalyses the reaction (2R)-2-phosphoglycerate = phosphoenolpyruvate + H2O. It functions in the pathway carbohydrate degradation; glycolysis; pyruvate from D-glyceraldehyde 3-phosphate: step 4/5. Functionally, catalyzes the reversible conversion of 2-phosphoglycerate (2-PG) into phosphoenolpyruvate (PEP). It is essential for the degradation of carbohydrates via glycolysis. The chain is Enolase from Anaeromyxobacter dehalogenans (strain 2CP-C).